An 898-amino-acid polypeptide reads, in one-letter code: Magnesium-transporting ATPase, P-type 1 (898 aa).

The Cytoplasmic portion of the chain corresponds to 1–94 (MFKEIFTRLI…QPSPWWVHLW (94 aa)). Residues 95-115 (VCYRNPFNILLTILGAISYAT) traverse the membrane as a helical segment. Position 116 (E116) is a topological domain, extracellular. Residues 117–137 (DLFAAGVIALMVAISTLLNFI) traverse the membrane as a helical segment. Residues 138-287 (QEARSTKAAD…PNAFQQGISR (150 aa)) lie on the Cytoplasmic side of the membrane. A helical membrane pass occupies residues 288 to 308 (VSMLLIRFMLVMAPVVLLING). At 309–317 (YTKGDWWEA) the chain is on the extracellular side. Residues 318–335 (ALFALSVAVGLTPEMLPM) traverse the membrane as a helical segment. A Mg(2+)-binding site is contributed by E331. At 336-695 (IVTSTLARGA…IEGRRTFANM (360 aa)) the chain is on the cytoplasmic side. Residue D373 is the 4-aspartylphosphate intermediate of the active site. Positions 641, 645, and 709 each coordinate Mg(2+). Residues 696–715 (LKYIKMTASSNFGNVFSVLV) form a helical membrane-spanning segment. Topologically, residues 716-724 (ASAFLPFLP) are extracellular. Residues 725-744 (MLPLHLLIQNLLYDVSQVAI) traverse the membrane as a helical segment. Mg(2+) is bound by residues N734 and D738. The Cytoplasmic portion of the chain corresponds to 745 to 766 (PFDNVDDEQIQKPQRWNPADLG). Residues 767–790 (RFMIFFGPISSIFDILTFCLMWWV) form a helical membrane-spanning segment. The Extracellular segment spans residues 791–799 (FHANTPETQ). A helical transmembrane segment spans residues 800-818 (TLFQSGWFVVGLLSQTLIV). Residues 819–831 (HMIRTRRVPFIQS) lie on the Cytoplasmic side of the membrane. Residues 832–851 (CASWPLMIMTVIVMIVGIAL) traverse the membrane as a helical segment. Residues 852 to 866 (PFSPLASYLQLQALP) are Extracellular-facing. A helical transmembrane segment spans residues 867-886 (LSYFPWLVAILAGYMTLTQL). The Cytoplasmic portion of the chain corresponds to 887-898 (VKGFYSRRYGWQ).

Belongs to the cation transport ATPase (P-type) (TC 3.A.3) family. Type IIIB subfamily.

The protein resides in the cell inner membrane. It carries out the reaction Mg(2+)(out) + ATP + H2O = Mg(2+)(in) + ADP + phosphate + H(+). Functionally, mediates magnesium influx to the cytosol. In Escherichia coli O157:H7, this protein is Magnesium-transporting ATPase, P-type 1 (mgtA).